We begin with the raw amino-acid sequence, 205 residues long: High frequency lysogenization protein HflD homolog (205 aa).

It belongs to the HflD family.

The protein resides in the cytoplasm. It is found in the cell inner membrane. This is High frequency lysogenization protein HflD homolog from Shewanella piezotolerans (strain WP3 / JCM 13877).